The sequence spans 350 residues: UDP-3-O-acylglucosamine N-acyltransferase (350 aa).

The active-site Proton acceptor is His240.

It belongs to the transferase hexapeptide repeat family. LpxD subfamily. Homotrimer.

It catalyses the reaction a UDP-3-O-[(3R)-3-hydroxyacyl]-alpha-D-glucosamine + a (3R)-hydroxyacyl-[ACP] = a UDP-2-N,3-O-bis[(3R)-3-hydroxyacyl]-alpha-D-glucosamine + holo-[ACP] + H(+). It participates in bacterial outer membrane biogenesis; LPS lipid A biosynthesis. Functionally, catalyzes the N-acylation of UDP-3-O-acylglucosamine using 3-hydroxyacyl-ACP as the acyl donor. Is involved in the biosynthesis of lipid A, a phosphorylated glycolipid that anchors the lipopolysaccharide to the outer membrane of the cell. The sequence is that of UDP-3-O-acylglucosamine N-acyltransferase from Methylobacillus flagellatus (strain ATCC 51484 / DSM 6875 / VKM B-1610 / KT).